Consider the following 475-residue polypeptide: Ribulose bisphosphate carboxylase large chain (475 aa).

The propeptide occupies 1-2 (MS). An N-acetylproline modification is found at Pro3. Lys14 carries the post-translational modification N6,N6,N6-trimethyllysine. Substrate is bound by residues Asn123 and Thr173. Lys175 functions as the Proton acceptor in the catalytic mechanism. Position 177 (Lys177) interacts with substrate. Mg(2+) contacts are provided by Lys201, Asp203, and Glu204. Lys201 is subject to N6-carboxylysine. The active-site Proton acceptor is the His294. Arg295, His327, and Ser379 together coordinate substrate.

The protein belongs to the RuBisCO large chain family. Type I subfamily. Heterohexadecamer of 8 large chains and 8 small chains; disulfide-linked. The disulfide link is formed within the large subunit homodimers. Mg(2+) is required as a cofactor. In terms of processing, the disulfide bond which can form in the large chain dimeric partners within the hexadecamer appears to be associated with oxidative stress and protein turnover.

The protein resides in the plastid. It is found in the chloroplast. The enzyme catalyses 2 (2R)-3-phosphoglycerate + 2 H(+) = D-ribulose 1,5-bisphosphate + CO2 + H2O. The catalysed reaction is D-ribulose 1,5-bisphosphate + O2 = 2-phosphoglycolate + (2R)-3-phosphoglycerate + 2 H(+). In terms of biological role, ruBisCO catalyzes two reactions: the carboxylation of D-ribulose 1,5-bisphosphate, the primary event in carbon dioxide fixation, as well as the oxidative fragmentation of the pentose substrate in the photorespiration process. Both reactions occur simultaneously and in competition at the same active site. The polypeptide is Ribulose bisphosphate carboxylase large chain (Equisetum arvense (Field horsetail)).